The following is a 35-amino-acid chain: Sperm protamine alpha isoform 2 (35 aa).

A disordered region spans residues 1–35 (MPRRRRRASRPIRRRRRARRSTAVRRRRRVVRRRR). Phosphoserine occurs at positions 9 and 21.

In terms of processing, phosphorylated in immature sperm. Dephosphorylated in mature sperm allowing a stronger interaction with DNA. Gonads.

Its subcellular location is the nucleus. It is found in the chromosome. Protamines substitute for histones in the chromatin of sperm during the haploid phase of spermatogenesis. They compact sperm DNA into a highly condensed, stable and inactive complex. The polypeptide is Sperm protamine alpha isoform 2 (Scomber scombrus (Atlantic mackerel)).